Here is a 101-residue protein sequence, read N- to C-terminus: Small ribosomal subunit protein uS14 (101 aa).

This sequence belongs to the universal ribosomal protein uS14 family. In terms of assembly, part of the 30S ribosomal subunit. Contacts proteins S3 and S10.

In terms of biological role, binds 16S rRNA, required for the assembly of 30S particles and may also be responsible for determining the conformation of the 16S rRNA at the A site. The sequence is that of Small ribosomal subunit protein uS14 from Shewanella denitrificans (strain OS217 / ATCC BAA-1090 / DSM 15013).